We begin with the raw amino-acid sequence, 192 residues long: Adenylate kinase (192 aa).

10 to 15 serves as a coordination point for ATP; sequence GAGKGT. An NMP region spans residues 30-59; the sequence is STGDMLREVIRRETEIGKKAKAMINAGTLV. Residues T31, R36, 57–59, 85–88, and Q92 contribute to the AMP site; these read TLV and GYPR. Residues 126-142 are LID; the sequence is KRVQETIIAGGQVRSDD. R127 is an ATP binding site. Residues R139 and R150 each contribute to the AMP site. I178 serves as a coordination point for ATP.

The protein belongs to the adenylate kinase family. Monomer.

It localises to the cytoplasm. It catalyses the reaction AMP + ATP = 2 ADP. Its pathway is purine metabolism; AMP biosynthesis via salvage pathway; AMP from ADP: step 1/1. Catalyzes the reversible transfer of the terminal phosphate group between ATP and AMP. Plays an important role in cellular energy homeostasis and in adenine nucleotide metabolism. The protein is Adenylate kinase of Bartonella henselae (strain ATCC 49882 / DSM 28221 / CCUG 30454 / Houston 1) (Rochalimaea henselae).